We begin with the raw amino-acid sequence, 245 residues long: Phosducin (245 aa).

A disordered region spans residues 1–70 (MEKAKSQSLE…DKDSKERFSR (70 aa)). A Phosducin domain is found at 1–244 (MEKAKSQSLE…LEQTNMEEDM (244 aa)). Basic and acidic residues-rich tracts occupy residues 28–50 (DWRK…KEIL) and 58–69 (SRDDKDSKERFS). Ser-73 is modified (phosphoserine; by PKA). The thioredoxin fold stretch occupies residues 111–245 (YGFVYELESG…EQTNMEEDME (135 aa)).

Belongs to the phosducin family. Interacts with CRX. Forms a complex with the beta and gamma subunits of the GTP-binding protein, transducin. Post-translationally, light-induced changes in cyclic nucleotide levels modulate the phosphorylation of this protein by cAMP kinase.

It is found in the cytoplasm. The protein localises to the cytosol. The protein resides in the nucleus. Its subcellular location is the cell projection. It localises to the cilium. It is found in the photoreceptor outer segment. The protein localises to the photoreceptor inner segment. Functionally, inhibits the transcriptional activation activity of the cone-rod homeobox CRX. May participate in the regulation of visual phototransduction or in the integration of photoreceptor metabolism. The polypeptide is Phosducin (PDC) (Bos taurus (Bovine)).